The sequence spans 245 residues: MSQSTSVLRRNGFTFKQFFVAHDRCAMKVGTDGILLGAWAPVAGVKRCLDIGAGSGLLALMLAQRTSDSVIIDAVELESEAATQAQENVAQSPWLERINVHTADIQQWVTQQTARFDLIISNPPYYEQGVECATPQREQARYTTSLDHQTLLTCAAECITEEGFFCVVLPEQIGNSFTELALSMGWHLRLRTDVAENEARLPHRVLLAFSPQAGECFSDRLVIRGPDQNYSEAYTALTQAFYLFM.

This sequence belongs to the methyltransferase superfamily. tRNA (adenine-N(6)-)-methyltransferase family.

Its subcellular location is the cytoplasm. The enzyme catalyses adenosine(37) in tRNA1(Val) + S-adenosyl-L-methionine = N(6)-methyladenosine(37) in tRNA1(Val) + S-adenosyl-L-homocysteine + H(+). Its function is as follows. Specifically methylates the adenine in position 37 of tRNA(1)(Val) (anticodon cmo5UAC). The polypeptide is tRNA1(Val) (adenine(37)-N6)-methyltransferase (Escherichia coli O157:H7).